A 694-amino-acid polypeptide reads, in one-letter code: Two-component response regulator ORR25 (694 aa).

One can recognise a Response regulatory domain in the interval 17 to 132 (RVLAVDDSPV…DIQNIWQHVW (116 aa)). Asp-68 bears the 4-aspartylphosphate mark. In terms of domain architecture, HTH myb-type spans 183–242 (TLKRQRVVWTPELHRDFVIAVHELGVDRAVPRKILRMMKVDYMTRENIASHLQKYRLYLK). A DNA-binding region (H-T-H motif) is located at residues 213–238 (PRKILRMMKVDYMTRENIASHLQKYR). The interval 326-349 (VGHGGSPGNNPVFQPLQNSSNARK) is disordered. Positions 333–347 (GNNPVFQPLQNSSNA) are enriched in polar residues.

It belongs to the ARR family. Type-B subfamily. Two-component system major event consists of a His-to-Asp phosphorelay between a sensor histidine kinase (HK) and a response regulator (RR). In plants, the His-to-Asp phosphorelay involves an additional intermediate named Histidine-containing phosphotransfer protein (HPt). This multistep phosphorelay consists of a His-Asp-His-Asp sequential transfer of a phosphate group between first a His and an Asp of the HK protein, followed by the transfer to a conserved His of the HPt protein and finally the transfer to an Asp in the receiver domain of the RR protein.

It is found in the nucleus. Transcriptional activator that binds specific DNA sequence. Functions as a response regulator involved in His-to-Asp phosphorelay signal transduction system. Phosphorylation of the Asp residue in the receiver domain activates the ability of the protein to promote the transcription of target genes. May directly activate some type-A response regulators in response to cytokinins. The sequence is that of Two-component response regulator ORR25 from Oryza sativa subsp. japonica (Rice).